The chain runs to 392 residues: 1-deoxy-D-xylulose 5-phosphate reductoisomerase (392 aa).

7 residues coordinate NADPH: T14, G15, S16, I17, G40, Q43, and N126. Residue K127 coordinates 1-deoxy-D-xylulose 5-phosphate. NADPH is bound at residue E128. D150 is a Mn(2+) binding site. 1-deoxy-D-xylulose 5-phosphate contacts are provided by S151, E152, S176, and H199. Position 152 (E152) interacts with Mn(2+). G205 is a binding site for NADPH. 1-deoxy-D-xylulose 5-phosphate-binding residues include S212, N217, K218, and E221. E221 provides a ligand contact to Mn(2+).

Belongs to the DXR family. The cofactor is Mg(2+). Requires Mn(2+) as cofactor.

The catalysed reaction is 2-C-methyl-D-erythritol 4-phosphate + NADP(+) = 1-deoxy-D-xylulose 5-phosphate + NADPH + H(+). Its pathway is isoprenoid biosynthesis; isopentenyl diphosphate biosynthesis via DXP pathway; isopentenyl diphosphate from 1-deoxy-D-xylulose 5-phosphate: step 1/6. In terms of biological role, catalyzes the NADPH-dependent rearrangement and reduction of 1-deoxy-D-xylulose-5-phosphate (DXP) to 2-C-methyl-D-erythritol 4-phosphate (MEP). The sequence is that of 1-deoxy-D-xylulose 5-phosphate reductoisomerase from Corynebacterium glutamicum (strain ATCC 13032 / DSM 20300 / JCM 1318 / BCRC 11384 / CCUG 27702 / LMG 3730 / NBRC 12168 / NCIMB 10025 / NRRL B-2784 / 534).